The primary structure comprises 643 residues: Phosphomethylpyrimidine synthase (643 aa).

Residues asparagine 248, methionine 277, tyrosine 306, histidine 342, 362-364, 403-406, and glutamate 442 each bind substrate; these read SRG and DGLR. Histidine 446 is a binding site for Zn(2+). Tyrosine 469 is a substrate binding site. Histidine 510 is a Zn(2+) binding site. [4Fe-4S] cluster is bound by residues cysteine 590, cysteine 593, and cysteine 598.

The protein belongs to the ThiC family. As to quaternary structure, homodimer. [4Fe-4S] cluster serves as cofactor.

It carries out the reaction 5-amino-1-(5-phospho-beta-D-ribosyl)imidazole + S-adenosyl-L-methionine = 4-amino-2-methyl-5-(phosphooxymethyl)pyrimidine + CO + 5'-deoxyadenosine + formate + L-methionine + 3 H(+). It participates in cofactor biosynthesis; thiamine diphosphate biosynthesis. Catalyzes the synthesis of the hydroxymethylpyrimidine phosphate (HMP-P) moiety of thiamine from aminoimidazole ribotide (AIR) in a radical S-adenosyl-L-methionine (SAM)-dependent reaction. In Burkholderia mallei (strain NCTC 10247), this protein is Phosphomethylpyrimidine synthase.